The chain runs to 956 residues: Outer capsid protein VP2 (956 aa).

This sequence belongs to the orbivirus VP2 family.

It localises to the virion. The VP2 protein is one of the two proteins (with VP5) which constitute the virus particle outer capsid. It is the major target of the host immunogenic response. Responsible for viral attachment to target host cell, probably by binding to sialic acid. This attachment induces virion internalization predominantly through clathrin-dependent endocytosis. The protein is Outer capsid protein VP2 (Segment-2) of Bluetongue virus 11 (isolate USA) (BTV 11).